We begin with the raw amino-acid sequence, 37 residues long: Cytochrome b6-f complex subunit 5 (37 aa).

A helical membrane pass occupies residues 5 to 25 (LLSGIVLGLIPITLAGLFVTA).

Belongs to the PetG family. In terms of assembly, the 4 large subunits of the cytochrome b6-f complex are cytochrome b6, subunit IV (17 kDa polypeptide, PetD), cytochrome f and the Rieske protein, while the 4 small subunits are PetG, PetL, PetM and PetN. The complex functions as a dimer.

The protein resides in the plastid. It localises to the chloroplast thylakoid membrane. Component of the cytochrome b6-f complex, which mediates electron transfer between photosystem II (PSII) and photosystem I (PSI), cyclic electron flow around PSI, and state transitions. PetG is required for either the stability or assembly of the cytochrome b6-f complex. This chain is Cytochrome b6-f complex subunit 5, found in Zygnema circumcarinatum (Green alga).